The following is a 405-amino-acid chain: MNFGTLADIETRGKTVLVRVDFNSPIDPSSNTILDDKRFREHIPTLQALEDARVVVLAHQSRPGKKDFTTLAAHADKLERLMNMPVTYVDDIFGTCAKHAVRDAHPGDIVLLENVRFSAEENLTMKPEDGAKTHLVRKLASMADLFVYDAFGTAHRSQPTITGLSYAMKTVAGLLMEKEVSMLSRVFTSAPKPVTFVLGGTKVDDSIAVAGNVLANKTADKVAIIGVVANVFYLAKGIDIGEPSRNLIHMLGYDDEVAKAKTILDSYPDKVLLPEYVAVKEHDERKEYPITRVPKDCPILDMGTESIVQFSKALRNSGSIVFNGPAGVFEEAKFASGTFELLRAAANVDFSVCGGGHTAAVIEQLGLEPQYSHLSTGGGACIEFLTGKKLPAIAALEESWKKFGN.

Substrate contacts are provided by residues 21–23 (DFN), arginine 38, 59–62 (HQSR), arginine 116, and arginine 156. Residues glutamate 330 and 355–358 (GGHT) contribute to the ATP site.

This sequence belongs to the phosphoglycerate kinase family. Monomer.

The protein localises to the cytoplasm. The catalysed reaction is (2R)-3-phosphoglycerate + ATP = (2R)-3-phospho-glyceroyl phosphate + ADP. It participates in carbohydrate degradation; glycolysis; pyruvate from D-glyceraldehyde 3-phosphate: step 2/5. The sequence is that of Phosphoglycerate kinase from Methanocorpusculum labreanum (strain ATCC 43576 / DSM 4855 / Z).